Consider the following 121-residue polypeptide: Methylglyoxal synthase (121 aa).

In terms of domain architecture, MGS-like spans M1 to N121. Residues H9, K13, T35–T38, and S55–G56 contribute to the substrate site. D61 functions as the Proton donor/acceptor in the catalytic mechanism. H88 provides a ligand contact to substrate.

The protein belongs to the methylglyoxal synthase family.

The enzyme catalyses dihydroxyacetone phosphate = methylglyoxal + phosphate. In terms of biological role, catalyzes the formation of methylglyoxal from dihydroxyacetone phosphate. The chain is Methylglyoxal synthase from Carboxydothermus hydrogenoformans (strain ATCC BAA-161 / DSM 6008 / Z-2901).